The chain runs to 803 residues: Lon protease (803 aa).

In terms of domain architecture, Lon N-terminal spans 9-202 (MPVLPLRDVV…YLLGMMESEA (194 aa)). Residue 356 to 363 (GPPGVGKT) coordinates ATP. The Lon proteolytic domain maps to 592 to 773 (QNRIGEVTGL…DEVLGFALEN (182 aa)). Residues Ser679 and Lys722 contribute to the active site.

The protein belongs to the peptidase S16 family. Homohexamer. Organized in a ring with a central cavity.

The protein resides in the cytoplasm. The catalysed reaction is Hydrolysis of proteins in presence of ATP.. In terms of biological role, ATP-dependent serine protease that mediates the selective degradation of mutant and abnormal proteins as well as certain short-lived regulatory proteins. Required for cellular homeostasis and for survival from DNA damage and developmental changes induced by stress. Degrades polypeptides processively to yield small peptide fragments that are 5 to 10 amino acids long. Binds to DNA in a double-stranded, site-specific manner. The protein is Lon protease of Haemophilus influenzae (strain ATCC 51907 / DSM 11121 / KW20 / Rd).